Here is a 298-residue protein sequence, read N- to C-terminus: N-acetylmuramic acid 6-phosphate etherase (298 aa).

Residues 55–218 form the SIS domain; it reads IHAQVSGGGR…STGLMIKSGK (164 aa). The Proton donor role is filled by E83. E114 is an active-site residue.

The protein belongs to the GCKR-like family. MurNAc-6-P etherase subfamily. Homodimer.

The catalysed reaction is N-acetyl-D-muramate 6-phosphate + H2O = N-acetyl-D-glucosamine 6-phosphate + (R)-lactate. It participates in amino-sugar metabolism; 1,6-anhydro-N-acetylmuramate degradation. The protein operates within amino-sugar metabolism; N-acetylmuramate degradation. It functions in the pathway cell wall biogenesis; peptidoglycan recycling. In terms of biological role, specifically catalyzes the cleavage of the D-lactyl ether substituent of MurNAc 6-phosphate, producing GlcNAc 6-phosphate and D-lactate. Together with AnmK, is also required for the utilization of anhydro-N-acetylmuramic acid (anhMurNAc) either imported from the medium or derived from its own cell wall murein, and thus plays a role in cell wall recycling. The polypeptide is N-acetylmuramic acid 6-phosphate etherase (Shigella sonnei (strain Ss046)).